We begin with the raw amino-acid sequence, 614 residues long: MRLTRALTPAILALPAAHAAASLQDWQSLNTTLDHRLHAVTPLALPCFSIYNNHSHAPNEDACLNIQDHYTNASYRVDQVSAYVFSQSETCSPIPSQQCELDPSDPSNPAAYTNISCNTGSLPAYYIDVQHASDVTAAFHFAAKTNTAISIKNSGHDYNGRSSGPGSLSLRTRTLRSTTYHPSFTPASCKTPTGKAVTLGAGVNFHEVYTFAHENKVTFVGGSGPTVGASGGWVLTGGHGVLSRAYGLGIDRVVEFELVTPDGEHRIANACQNADLFWALRGGGGSTFGVVLSSTHRVEPEAPLSLAYLALPPNASSSTSAAFLDLLVNYTLPWAEDAWGGFGNAAATILATPLLSLPEAKTSMATAIDFVTAHGGTGYVETLSSFYEMYTKYIVPSASAVGSVRFNHNWIIPNSLFATASGQKKLRKHLDWMGSVGLVPGLLETTPYLYSGNGHGRSNNNNSNNSSTSTSTSTSSKNGSVKPYAYGGKETTSSTPAWRNSAAVLIAEVGWAFNATLSEKKALAKTLVEASERVRELAPGSGAYANEAHPWVEDWQDAFWGGNYRRLADLKKKWDPKGLLGCWHCVGSEGEGKKETGTAWRAEVVGGKCLGRLI.

Positions 1 to 19 (MRLTRALTPAILALPAAHA) are cleaved as a signal peptide. N-linked (GlcNAc...) asparagine glycosylation is found at Asn-30, Asn-53, Asn-72, and Asn-114. Residues 119 to 301 (TGSLPAYYID…LSSTHRVEPE (183 aa)) enclose the FAD-binding PCMH-type domain. N-linked (GlcNAc...) asparagine glycosylation is found at Asn-314, Asn-329, Asn-461, Asn-465, Asn-478, and Asn-514. The segment at 453 to 495 (NGHGRSNNNNSNNSSTSTSTSTSSKNGSVKPYAYGGKETTSST) is disordered. The segment covering 456 to 480 (GRSNNNNSNNSSTSTSTSTSSKNGS) has biased composition (low complexity).

The protein belongs to the oxygen-dependent FAD-linked oxidoreductase family. FAD serves as cofactor.

It functions in the pathway mycotoxin biosynthesis. Its function is as follows. FAD-linked oxidoreductase; part of the gene cluster that mediates the biosynthesis of the cytotoxic leucine-containing cytochalasans, including aspochalasin C, aspochalasin E, TMC-169, flavichalasine F, aspergillin PZ, aspochalasin M and flavichalasine G. The first step in the pathway is catalyzed by the hybrid PKS-NRPS ffsA that utilizes 8 units of malonyl-CoA to iteratively assemble the octaketide chain before addition of L-leucine by the C-terminal NRPS modules. Because ffsA lacks a designated enoylreductase (ER) domain, the required activity is provided the enoyl reductase fssC. The methyltransferase (MT) domain of ffsA catalyzes the alpha-methylation at C10 and C14 using S-adenosyl-L-methionine as the methyl-donating cosubstrate. Reduction by the hydrolyase ffsE, followed by dehydration and intra-molecular Diels-Alder cyclization by the Diels-Alderase ffsF then yield the required isoindolone-fused macrocycle. A number of oxidative steps catalyzed by the tailoring cytochrome P450 monooxygenase ffsD, the FAD-linked oxidoreductase ffsJ and the short-chain dehydrogenase/reductase ffsI, are further required to afford the final products. This Aspergillus flavipes protein is FAD-linked oxidoreductase ffsJ.